The chain runs to 191 residues: Thymidylate kinase (191 aa).

Residue 7 to 14 (GIDTCGKS) participates in ATP binding.

It belongs to the thymidylate kinase family.

It catalyses the reaction dTMP + ATP = dTDP + ADP. Functionally, phosphorylation of dTMP to form dTDP in both de novo and salvage pathways of dTTP synthesis. This Sulfurovum sp. (strain NBC37-1) protein is Thymidylate kinase.